A 462-amino-acid polypeptide reads, in one-letter code: uncharacterized protein (462 aa).

The TRAM domain occupies 12–70 (MLKKNDIIQVAISDLSHEGAGVAKHDGFVFFVDNALPEEVIDMRVLKVNKNSGFGKVEA). Residues Q294, Y323, E344, and D392 each contribute to the S-adenosyl-L-methionine site. C419 (nucleophile) is an active-site residue.

The protein belongs to the class I-like SAM-binding methyltransferase superfamily. RNA M5U methyltransferase family.

This is an uncharacterized protein from Streptococcus pyogenes serotype M18 (strain MGAS8232).